An 892-amino-acid polypeptide reads, in one-letter code: DNA mismatch repair protein MutS (892 aa).

G607 to S614 is a binding site for ATP.

Belongs to the DNA mismatch repair MutS family.

This protein is involved in the repair of mismatches in DNA. It is possible that it carries out the mismatch recognition step. This protein has a weak ATPase activity. This is DNA mismatch repair protein MutS from Bacillus cereus (strain G9842).